The chain runs to 879 residues: Aminopeptidase M1 (879 aa).

Positions H98–V205 are required for membrane association. Substrate-binding positions include E138 and G271–N275. H307 is a binding site for Zn(2+). Residue E308 is the Proton acceptor of the active site. Zn(2+) contacts are provided by H311 and E330. The Dileucine internalization motif motif lies at L728–L729.

It belongs to the peptidase M1 family. As to quaternary structure, homodimer. Interacts with N-1-naphthylphthalamic acid (NPA). Zn(2+) is required as a cofactor. As to expression, ubiquitous with preferential expression in 5 days-old seedlings, roots, young flowers, upper inflorescence stems, and rosette leaves.

It is found in the membrane. The protein resides in the microsome membrane. Its subcellular location is the cytoplasm. It carries out the reaction Release of an N-terminal amino acid, Xaa-|-Yaa- from a peptide, amide or arylamide. Xaa is preferably Ala, but may be most amino acids including Pro (slow action). When a terminal hydrophobic residue is followed by a prolyl residue, the two may be released as an intact Xaa-Pro dipeptide.. Metallopeptidase that binds to the auxin transport inhibitor N-1-naphthylphthalamic acid (NPA). Required for embryonic and seedling development as well as cell cycle progression. Homodimerization is required to proper localization and activity. May play a negative role in the regulation of PIN auxin transport proteins. The sequence is that of Aminopeptidase M1 (APM1) from Arabidopsis thaliana (Mouse-ear cress).